The chain runs to 377 residues: Polar flagellin F (377 aa).

2 coiled-coil regions span residues 98–131 and 302–339; these read QSAN…ETTS and DSQR…IQDT.

It belongs to the bacterial flagellin family. In terms of assembly, heteromer of multiple flagellin subunits including FlaA, FlaB/D, FlaC, FlaE and FlaF.

Its subcellular location is the secreted. It is found in the bacterial flagellum. Its function is as follows. Flagellin is the subunit protein which polymerizes to form the filaments of bacterial flagella. The polypeptide is Polar flagellin F (flaF) (Vibrio parahaemolyticus serotype O3:K6 (strain RIMD 2210633)).